The sequence spans 222 residues: Uracil-DNA glycosylase (222 aa).

The active-site Proton acceptor is aspartate 66.

This sequence belongs to the uracil-DNA glycosylase (UDG) superfamily. UNG family.

The protein resides in the cytoplasm. It catalyses the reaction Hydrolyzes single-stranded DNA or mismatched double-stranded DNA and polynucleotides, releasing free uracil.. Functionally, excises uracil residues from the DNA which can arise as a result of misincorporation of dUMP residues by DNA polymerase or due to deamination of cytosine. The polypeptide is Uracil-DNA glycosylase (Porphyromonas gingivalis (strain ATCC BAA-308 / W83)).